Consider the following 141-residue polypeptide: Lutropin subunit beta (141 aa).

Residues 1–20 (MEMLQGLLLWLLLNVGGVWA) form the signal peptide. 6 cysteine pairs are disulfide-bonded: C29/C77, C43/C92, C46/C130, C54/C108, C58/C110, and C113/C120. The N-linked (GlcNAc...) asparagine glycan is linked to N33.

The protein belongs to the glycoprotein hormones subunit beta family. As to quaternary structure, heterodimer of a common alpha chain and a unique beta chain which confers biological specificity to thyrotropin, lutropin, follitropin and gonadotropin.

It is found in the secreted. Its function is as follows. Promotes spermatogenesis and ovulation by stimulating the testes and ovaries to synthesize steroids. The polypeptide is Lutropin subunit beta (LHB) (Ailurus fulgens (Himalayan red panda)).